Consider the following 522-residue polypeptide: Peptide methionine sulfoxide reductase MsrA/MsrB (522 aa).

A Thioredoxin domain is found at L17–A174. A disulfide bond links C68 and C71. A peptide methionine sulfoxide reductase A region spans residues R199–R354. The active site involves C207. Residues D383–L506 form the MsrB domain. A disulfide bond links C440 and C495. C495 serves as the catalytic Nucleophile.

The protein in the N-terminal section; belongs to the thioredoxin family. It in the central section; belongs to the MsrA Met sulfoxide reductase family. This sequence in the C-terminal section; belongs to the MsrB Met sulfoxide reductase family.

The catalysed reaction is L-methionyl-[protein] + [thioredoxin]-disulfide + H2O = L-methionyl-(S)-S-oxide-[protein] + [thioredoxin]-dithiol. It catalyses the reaction [thioredoxin]-disulfide + L-methionine + H2O = L-methionine (S)-S-oxide + [thioredoxin]-dithiol. The enzyme catalyses L-methionyl-[protein] + [thioredoxin]-disulfide + H2O = L-methionyl-(R)-S-oxide-[protein] + [thioredoxin]-dithiol. Has an important function as a repair enzyme for proteins that have been inactivated by oxidation. Catalyzes the reversible oxidation-reduction of methionine sulfoxide in proteins to methionine. This Neisseria gonorrhoeae protein is Peptide methionine sulfoxide reductase MsrA/MsrB (msrAB).